We begin with the raw amino-acid sequence, 58 residues long: Ribosome modulation factor (58 aa).

The span at 1–14 (MKRQKRDKLTRAHS) shows a compositional bias: basic residues. The interval 1–25 (MKRQKRDKLTRAHSKGYQAGISGRS) is disordered.

The protein belongs to the ribosome modulation factor family.

The protein resides in the cytoplasm. Functionally, during stationary phase, converts 70S ribosomes to an inactive dimeric form (100S ribosomes). The sequence is that of Ribosome modulation factor from Alteromonas naphthalenivorans.